The sequence spans 206 residues: High frequency lysogenization protein HflD homolog (206 aa).

The protein belongs to the HflD family.

It localises to the cytoplasm. Its subcellular location is the cell inner membrane. This is High frequency lysogenization protein HflD homolog from Pseudomonas savastanoi pv. phaseolicola (strain 1448A / Race 6) (Pseudomonas syringae pv. phaseolicola (strain 1448A / Race 6)).